Here is a 518-residue protein sequence, read N- to C-terminus: GMP synthase [glutamine-hydrolyzing] (518 aa).

The 195-residue stretch at 6–200 (RLLIIDFGSQ…FVKLAGFKGD (195 aa)) folds into the Glutamine amidotransferase type-1 domain. Cysteine 84 (nucleophile) is an active-site residue. Active-site residues include histidine 175 and glutamate 177. Residues 201–393 (WTMGAYREEA…LGLPDSFIGR (193 aa)) enclose the GMPS ATP-PPase domain. 228-234 (SGGVDSS) is a binding site for ATP.

In terms of assembly, homodimer.

It catalyses the reaction XMP + L-glutamine + ATP + H2O = GMP + L-glutamate + AMP + diphosphate + 2 H(+). It functions in the pathway purine metabolism; GMP biosynthesis; GMP from XMP (L-Gln route): step 1/1. Its function is as follows. Catalyzes the synthesis of GMP from XMP. The polypeptide is GMP synthase [glutamine-hydrolyzing] (Cereibacter sphaeroides (strain ATCC 17025 / ATH 2.4.3) (Rhodobacter sphaeroides)).